The following is a 228-amino-acid chain: MHPSARLYNNIALWFYDYLVHSIFMVYGWHCPTKSVGLPFFSSHVGPKHMDVGVGTGYFPVAVRKSSRKRNGQLKPQWPQKLMLVDLNPNCTAMAATRVGAPDCTETLTADVLQPIPAAGKHETFDSLSLMNVLHCLPGTSESKAQAFGHLKPFLKEDGVLFGSTILGRGVEHNRFGRLVMWLSNSLGIFHNYGDHPDDFVRALQKDFNQVEHVVVGRVLLFTAKEPN.

It belongs to the methyltransferase superfamily.

Its pathway is secondary metabolite biosynthesis; terpenoid biosynthesis. The protein operates within mycotoxin biosynthesis. Methyltransferase; part of the gene cluster that mediates the biosynthesis of the neurotoxin verrucosidin, a methylated alpha-pyrone polyketide that inhibits oxidative phosphorylation in mitochondria and thereby causes neurological diseases. The carbon backbone of verrucosidin is synthesized by the HR-PKS verA, and further modified by the other verrucodidin cluster enzymes. The protein is Methyltransferase verB of Penicillium polonicum.